The sequence spans 352 residues: MRPLNVQIRLGNLRHNYRILKEMHGGKLLAVVKADAYGHGAVRCAFALADLADGFAVATIDEGIRLRESGITHPIVLLEGVFEASEYEAVEQYSLWPAVGNQWQLEALLSRHWKKPVKVWLKMDSGMHRTGFFPHDYASVYAALKQSEYVDSIVKFSHFSCADEPESGMTEIQMEAFDLGTEGLEGEESLANSAAILNVPEARRDWGRAGLALYGISPFGGSDDRLKPVMRLSTRIFGERVLQPHSPIGYGATFYTSKSTRVGLIACGYADGYPRRAPSNSPVAVDGKLTRVIGRVSMDMMTIELDASQEGLGHEVELWGDTVNINTVAEAAGTIPYELMCNIKRAKFTYIE.

Lysine 33 (proton acceptor; specific for D-alanine) is an active-site residue. Lysine 33 is modified (N6-(pyridoxal phosphate)lysine). Arginine 129 provides a ligand contact to substrate. Tyrosine 250 (proton acceptor; specific for L-alanine) is an active-site residue. Position 298 (methionine 298) interacts with substrate.

It belongs to the alanine racemase family. Pyridoxal 5'-phosphate is required as a cofactor.

It carries out the reaction L-alanine = D-alanine. Its pathway is amino-acid biosynthesis; D-alanine biosynthesis; D-alanine from L-alanine: step 1/1. Its function is as follows. Catalyzes the interconversion of L-alanine and D-alanine. May also act on other amino acids. The chain is Alanine racemase (alr) from Neisseria meningitidis serogroup A / serotype 4A (strain DSM 15465 / Z2491).